Here is an 873-residue protein sequence, read N- to C-terminus: DNA mismatch repair protein MutS (873 aa).

625–632 (GPNMGGKS) is an ATP binding site.

Belongs to the DNA mismatch repair MutS family.

In terms of biological role, this protein is involved in the repair of mismatches in DNA. It is possible that it carries out the mismatch recognition step. This protein has a weak ATPase activity. This Xanthomonas campestris pv. campestris (strain 8004) protein is DNA mismatch repair protein MutS.